Consider the following 93-residue polypeptide: AVLDGDVRKCLPCGPRNRGRCFGPRICCGEELGCYLGTPETLRCQEESFLPTPCESGRKPCGGDGASCAAPGICCSSEGCVADPACEREALFA.

Cystine bridges form between Cys10–Cys54, Cys13–Cys27, Cys21–Cys44, Cys28–Cys34, Cys61–Cys74, Cys68–Cys86, and Cys75–Cys80.

Belongs to the vasopressin/oxytocin family.

The protein localises to the secreted. Its function is as follows. Neurophysin 1 specifically binds oxytocin. In Anser anser anser (Western greylag goose), this protein is Neurophysin 1.